The primary structure comprises 173 residues: Lipid A deacylase PagL (173 aa).

The first 23 residues, 1-23 (MKKLLPLAVLAALSSVHVASAQA), serve as a signal peptide directing secretion. Residues 25 to 28 (DVSA) are Periplasmic-facing. Residues 29 to 32 (AVGA) traverse the membrane as a beta stranded segment. A topological domain (periplasmic) is located at residue Thr-33. The chain crosses the membrane as a beta stranded span at residues 34–49 (GQSGMTYRLGLSWDWD). Over 50–56 (KSWWQTS) the chain is Extracellular. Residues 57–71 (TGRLTGYWDAGYTYW) traverse the membrane as a beta stranded segment. Residues 72-73 (EG) lie on the Periplasmic side of the membrane. A beta stranded transmembrane segment spans residues 74-89 (GDEGAGKHSLSFAPVF). Residue Val-90 is a topological domain, extracellular. A beta stranded membrane pass occupies residues 91 to 93 (YEF). Residues 94-95 (AG) are Periplasmic-facing. A beta stranded transmembrane segment spans residues 96 to 98 (DSI). Over 99–100 (KP) the chain is Extracellular. The chain crosses the membrane as a beta stranded span at residues 101–115 (FIEAGIGVAAFSGTR). Topologically, residues 116-117 (VG) are periplasmic. The beta stranded transmembrane segment at 118–128 (DQNLGSSLNFE) threads the bilayer. At 129-138 (DRIGAGLKFA) the chain is on the extracellular side. Residues 139–148 (NGQSVGVRAI) traverse the membrane as a beta stranded segment. Active-site charge relay system residues include His-149, Ser-151, and Glu-163. Residues 149 to 173 (HYSNAGLKQPNDGIESYSLFYKIPI) lie on the Periplasmic side of the membrane.

It belongs to the PagL family. In terms of assembly, homodimer.

Its subcellular location is the cell outer membrane. It carries out the reaction a 3-(acyloxy)acyl derivative of bacterial toxin + H2O = a 3-hydroxyacyl derivative of bacterial toxin + a fatty acid + H(+). Its activity is regulated as follows. Decreased activity at low temperatures (15 or 21 degrees Celsius). In terms of biological role, has lipid A 3-O-deacylase activity. Hydrolyzes the ester bond at the 3 position of lipid A, a bioactive component of lipopolysaccharide (LPS), thereby releasing the primary fatty acyl moiety. Lacks fatty acyl chain-length specificity as removes both 3-OH C10 and 3-OH C14 fatty acids from lipid A. The sequence is that of Lipid A deacylase PagL from Pseudomonas aeruginosa (strain ATCC 15692 / DSM 22644 / CIP 104116 / JCM 14847 / LMG 12228 / 1C / PRS 101 / PAO1).